We begin with the raw amino-acid sequence, 618 residues long: Transport protein particle subunit trs85-2 (618 aa).

Belongs to the TRS85 family. Part of the multisubunit TRAPP (transport protein particle) complexes I and II.

It is found in the golgi apparatus. The protein localises to the cis-Golgi network. Component of the TRAPP I and TRAPP II complexes. TRAPP I plays a key role in the late stages of endoplasmic reticulum to Golgi traffic. TRAPP II seems to play a role in intra-Golgi transport. Has a role late in meiosis following DNA replication. The protein is Transport protein particle subunit trs85-2 (trs85-2) of Schizosaccharomyces pombe (strain 972 / ATCC 24843) (Fission yeast).